The sequence spans 886 residues: MDKNFYKNSLNIFNSNFSMKANLSEKDKFYADFWEKNQIYQQILRKRRGNPRFILHDGPPYANGDIHIGHALNKILKDIIVRYKTMAGFYSPFVPGWDTHGLPIENKIINQIGSKSTLEIRRKSNDFANSQILAQMKQFKKLNLLTDFKQIYQTNTPNYEAKQLKLFKKMVSRGLVYRALKPVYWSPSSQSALAEAEIEYLEYRSPSLFTSFDIKKGNNFVAENDKLIIWTTTPWTLIANSGVAVGENFDYVRIKNGENFYVLAANLLEKLAVIFDWKHYEIIDNFPGRAILGIKYLHPIFEKICPIVSGNHVSLDVGSGLVHLAPLFGEDDYWIGRENNLEMVMHVNDDGKFNENAGQFSGQFYADSNKLITEFLEKKSKILHLSFIDHSFPHDWRTLKPVIYRGTPQWFVSIEKIKKDLEKAIEEIEFPENWLKKRLTKMVVERKDWLISRQRSWGIPLIIFYDQNKDPVLDKPEIFDYIISLVEKFGSRIWYEKTTDELLPEKYQNLGWTKENDILDVWFDSGVSFFAANISDEKPPFDIYFEGSDQYRGWFNSSLINSVIYFGFSPYKKLLSHGFVVDAKGNKMSKSRGNGVDPLLILSKYGCDIFRLWVANSEYYNDIVYSEAIFEQNVEIYRKIRNTVRFLITNLADFKPTKYELTEVDLYIFNKIQKLKNEIIQNYDQNRFVRVVKIINNFIIEFSNFYLSIVKDILYADKKESLKRRQVQYNLYELLQVLNIAIAPIMPTTAEEIYSFIQKNNKQISVHMEEFFKESHFDEELDAKWNEFFQIKDSVYQLIEQKIKSKEIKRPNEVGVLLKTDSDFIKSIDLKKLLMVAKVEFSNGKTEILQLNWEKCPRCWNHFEKINKVCARCFEVLSEIVPEKNS.

The short motif at 60-70 (PYANGDIHIGH) is the 'HIGH' region element. E546 provides a ligand contact to L-isoleucyl-5'-AMP. The short motif at 587–591 (KMSKS) is the 'KMSKS' region element. K590 contacts ATP. Residues C856, C859, C870, and C873 each contribute to the Zn(2+) site.

This sequence belongs to the class-I aminoacyl-tRNA synthetase family. IleS type 1 subfamily. In terms of assembly, monomer. Requires Zn(2+) as cofactor.

Its subcellular location is the cytoplasm. It catalyses the reaction tRNA(Ile) + L-isoleucine + ATP = L-isoleucyl-tRNA(Ile) + AMP + diphosphate. Catalyzes the attachment of isoleucine to tRNA(Ile). As IleRS can inadvertently accommodate and process structurally similar amino acids such as valine, to avoid such errors it has two additional distinct tRNA(Ile)-dependent editing activities. One activity is designated as 'pretransfer' editing and involves the hydrolysis of activated Val-AMP. The other activity is designated 'posttransfer' editing and involves deacylation of mischarged Val-tRNA(Ile). In Mesomycoplasma hyopneumoniae (strain J / ATCC 25934 / NCTC 10110) (Mycoplasma hyopneumoniae), this protein is Isoleucine--tRNA ligase.